An 84-amino-acid polypeptide reads, in one-letter code: uncharacterized protein (84 aa).

Basic residues-rich tracts occupy residues 1–15 and 67–84; these read MPPH…HGHH and HHGH…GHFF. Disordered regions lie at residues 1–22 and 64–84; these read MPPH…TYTT and TSHH…GHFF.

This is an uncharacterized protein from Dictyostelium discoideum (Social amoeba).